Reading from the N-terminus, the 39-residue chain is Potassium channel toxin alpha-KTx 2.5 (39 aa).

3 disulfide bridges follow: Cys-7/Cys-29, Cys-13/Cys-34, and Cys-17/Cys-36.

It belongs to the short scorpion toxin superfamily. Potassium channel inhibitor family. Alpha-KTx 02 subfamily. As to expression, expressed by the venom gland.

It localises to the secreted. In terms of biological role, potent selective inhibitor of Kv1.1/KCNA1, Kv1.2/KCNA2, Kv1.3/KCNA3 voltage-gated potassium channels. Weak inhibitor of Kv1.6/KCNA6 potassium channel. It also shows a weak interaction with nicotinic acetylcholine receptors (nAChR), suggesting it may weakly inhibit it. In Centruroides limbatus (Bark scorpion), this protein is Potassium channel toxin alpha-KTx 2.5.